A 564-amino-acid chain; its full sequence is NAD-dependent malic enzyme (564 aa).

Catalysis depends on Tyr-102, which acts as the Proton donor. Arg-155 lines the NAD(+) pocket. The active-site Proton acceptor is Lys-173. A divalent metal cation-binding residues include Glu-244, Asp-245, and Asp-268. NAD(+) is bound by residues Asp-268 and Asn-417.

Belongs to the malic enzymes family. Homotetramer. Requires Mg(2+) as cofactor. It depends on Mn(2+) as a cofactor.

It carries out the reaction (S)-malate + NAD(+) = pyruvate + CO2 + NADH. The catalysed reaction is oxaloacetate + H(+) = pyruvate + CO2. The sequence is that of NAD-dependent malic enzyme from Pseudomonas aeruginosa (strain UCBPP-PA14).